A 256-amino-acid chain; its full sequence is Phosphonates import ATP-binding protein PhnC (256 aa).

The 245-residue stretch at 7–251 (IEMKNVTKVY…VFDNIYNGGK (245 aa)) folds into the ABC transporter domain. An ATP-binding site is contributed by 40-47 (GLSGAGKS).

Belongs to the ABC transporter superfamily. Phosphonates importer (TC 3.A.1.9.1) family. The complex is composed of two ATP-binding proteins (PhnC), two transmembrane proteins (PhnE) and a solute-binding protein (PhnD).

The protein localises to the cell membrane. The catalysed reaction is phosphonate(out) + ATP + H2O = phosphonate(in) + ADP + phosphate + H(+). Part of the ABC transporter complex PhnCDE involved in phosphonates import. Responsible for energy coupling to the transport system. The protein is Phosphonates import ATP-binding protein PhnC of Lactobacillus delbrueckii subsp. bulgaricus (strain ATCC 11842 / DSM 20081 / BCRC 10696 / JCM 1002 / NBRC 13953 / NCIMB 11778 / NCTC 12712 / WDCM 00102 / Lb 14).